A 483-amino-acid polypeptide reads, in one-letter code: MSLEDSLRSLSLDYLNLLINGQAFSDVTFSVEGRLVHAHRCILAARSLFFRKFFCGPDPPPPSGNLDSPGGPRVNSPRPGGVIPVNSVGYEVFLLMLQFLYSGQVSIVPQKHEPRPNCGERACWHTHCTSAVDLALDTLAAARYFGVEQLALLTQKQLASMVEKASIEDVMKVLLASRKQDMHQLWTTCSHLVAKSGLPPEVLAKHLPIDIVAKIEELRLKSTLARRSLIPHHHHHHHHHGHHDMGAAADLEDQKIRRMRRALDSSDVELVKLMVMGEGLNLDEALALPYAVENCSREVVKALLELGAADVNYPSGPSGKTPLHIAAEMVSPDMVAVLLDHHADPNVRTVDGVTPLDILRTLTSDFLFKGAVPGLTHIEPNKLRLCLELVQSAALVMSREEGNANANSSNNNNAPCSAATPIYPPMNEDHNSSSSNANLNLDSRLVYLNLGAAQMSGDDDSSHGSHREAMNQAMYHHHHSHDY.

In terms of domain architecture, BTB spans 25–109; that stretch reads SDVTFSVEGR…LYSGQVSIVP (85 aa). A C2HC NPR-type zinc finger spans residues 115–129; the sequence is RPNCGERACWHTHCT. The Zn(2+) site is built by cysteine 118, cysteine 123, histidine 125, and cysteine 128. ANK repeat units lie at residues 254 to 283, 284 to 313, 318 to 347, and 351 to 385; these read QKIRRMRRALDSSDVELVKLMVMGEGLNLD, EALALPYAVENCSREVVKALLELGAADVNY, SGKTPLHIAAEMVSPDMVAVLLDHHADPNV, and DGVTPLDILRTLTSDFLFKGAVPGLTHIEPNKLRL. The segment at 401-437 is disordered; the sequence is EGNANANSSNNNNAPCSAATPIYPPMNEDHNSSSSNA. A compositionally biased stretch (low complexity) spans 403 to 419; sequence NANANSSNNNNAPCSAA.

The protein belongs to the plant 'ANKYRIN-BTB/POZ' family. 'NOOT-BOP-COCH-like' (NBCL) subfamily. In terms of assembly, homodimer. Interacts with APP1 around the plasma membrane and in the nucleus; this interaction disturbs APP1-mediated regulation of the nuclear transcription factor Y subunit (NF-YA1). In terms of tissue distribution, mainly expressed in root nodules, to a lesser extent in shoot apical meristems (SAM) and root meristems (RM), and barely in leaves, non-nodulating roots and root apical meristems (RAM).

It localises to the nucleus. Its subcellular location is the cytoplasm. The protein resides in the cell membrane. It functions in the pathway protein modification; protein ubiquitination. Functionally, may act as a substrate-specific adapter of an E3 ubiquitin-protein ligase complex (CUL3-RBX1-BTB) which mediates the ubiquitination and subsequent proteasomal degradation of target proteins. Transcriptional co-regulator involved in the promotion of leaf and floral meristem fate and determinacy. Required for the abscission of senescent organs, probably by regulating the cell wall disorganization in abscission zones (AZs, e.g. pulvini at the base of leaves). Involved in the coordination of the symbiotic nodule developmental program; promotes the formation of root nodules by interacting directly with APP1 to modulate the expression of the nuclear transcription factor Y subunit (NF-YA1), a key nodulin. Necessary for the robust maintenance of nodule identity throughout the nodule developmental program. This chain is BTB/POZ domain and ankyrin repeat-containing protein NBCL, found in Lotus japonicus (Lotus corniculatus var. japonicus).